The sequence spans 248 residues: Adenosylcobinamide-GDP ribazoletransferase (248 aa).

6 helical membrane passes run 36 to 56, 59 to 79, 113 to 133, 137 to 157, 170 to 190, and 199 to 219; these read FFLP…YLGL, FLPP…ITGG, FGTI…YSLV, CSIA…FLCL, IFIG…ALAM, and ITII…LLCL.

The protein belongs to the CobS family. Mg(2+) serves as cofactor.

The protein resides in the cell membrane. The enzyme catalyses alpha-ribazole + adenosylcob(III)inamide-GDP = adenosylcob(III)alamin + GMP + H(+). It carries out the reaction alpha-ribazole 5'-phosphate + adenosylcob(III)inamide-GDP = adenosylcob(III)alamin 5'-phosphate + GMP + H(+). It functions in the pathway cofactor biosynthesis; adenosylcobalamin biosynthesis; adenosylcobalamin from cob(II)yrinate a,c-diamide: step 7/7. Its function is as follows. Joins adenosylcobinamide-GDP and alpha-ribazole to generate adenosylcobalamin (Ado-cobalamin). Also synthesizes adenosylcobalamin 5'-phosphate from adenosylcobinamide-GDP and alpha-ribazole 5'-phosphate. The chain is Adenosylcobinamide-GDP ribazoletransferase from Clostridium botulinum (strain 657 / Type Ba4).